The following is a 152-amino-acid chain: Deoxyuridine 5'-triphosphate nucleotidohydrolase (152 aa).

Residues 72–74, Asn-85, and 89–91 contribute to the substrate site; these read RSG and TID.

The protein belongs to the dUTPase family. Requires Mg(2+) as cofactor.

It catalyses the reaction dUTP + H2O = dUMP + diphosphate + H(+). Its pathway is pyrimidine metabolism; dUMP biosynthesis; dUMP from dCTP (dUTP route): step 2/2. Functionally, this enzyme is involved in nucleotide metabolism: it produces dUMP, the immediate precursor of thymidine nucleotides and it decreases the intracellular concentration of dUTP so that uracil cannot be incorporated into DNA. The sequence is that of Deoxyuridine 5'-triphosphate nucleotidohydrolase from Afipia carboxidovorans (strain ATCC 49405 / DSM 1227 / KCTC 32145 / OM5) (Oligotropha carboxidovorans).